The sequence spans 429 residues: Putative GMP synthase [glutamine-hydrolyzing] (429 aa).

The region spanning 10 to 118 (TIFILDFGSQ…GYTPIHLYPC (109 aa)) is the Glutamine amidotransferase type-1 domain. The active-site Nucleophile is Cys-87. One can recognise a GMPS ATP-PPase domain in the interval 119–304 (ELFKHIVDCE…LGLSSYLLDR (186 aa)). Active-site residues include His-176 and Glu-178.

In terms of assembly, homodimer.

The enzyme catalyses XMP + L-glutamine + ATP + H2O = GMP + L-glutamate + AMP + diphosphate + 2 H(+). The protein operates within purine metabolism; GMP biosynthesis; GMP from XMP (L-Gln route): step 1/1. In terms of biological role, catalyzes the synthesis of GMP from XMP. This is Putative GMP synthase [glutamine-hydrolyzing] (guaA) from Chlamydia pneumoniae (Chlamydophila pneumoniae).